The following is a 93-amino-acid chain: UPF0358 protein BPUM_1375 (93 aa).

Belongs to the UPF0358 family.

This chain is UPF0358 protein BPUM_1375, found in Bacillus pumilus (strain SAFR-032).